Reading from the N-terminus, the 127-residue chain is Apolipoprotein C-IV (127 aa).

A signal peptide spans 1–27 (MSLLRNRLQDLPALCLCVLVLACIGAC).

Belongs to the apolipoprotein C4 family.

Its subcellular location is the secreted. Its function is as follows. May participate in lipoprotein metabolism. The chain is Apolipoprotein C-IV (APOC4) from Papio anubis (Olive baboon).